The primary structure comprises 521 residues: 7-deoxyloganic acid hydroxylase (521 aa).

Residues 8–28 (IIFLVFVSLTLYWVYRILDWV) form a helical membrane-spanning segment. Residues N107 and N311 are each glycosylated (N-linked (GlcNAc...) asparagine). C469 is a heme binding site.

The protein belongs to the cytochrome P450 family. In terms of tissue distribution, mostly present in actively growing aerial organs, including leaves, flower buds and stems, and, to a lower extent, in mature leaves, roots and opened flowers. Expressed in the leaf internal phloem-associated parenchyma (IPAP) inside the mesophyll.

The protein localises to the endoplasmic reticulum membrane. It catalyses the reaction 7-deoxyloganate + reduced [NADPH--hemoprotein reductase] + O2 = loganate + oxidized [NADPH--hemoprotein reductase] + H2O + H(+). The protein operates within alkaloid biosynthesis. In terms of biological role, component of the seco-iridoid and derivatives monoterpenoid indole alkaloids (MIAs, e.g. vincristine, quinine, and strychnine) biosynthesis pathway. Catalyzes the conversion of 7-deoxyloganic acid into loganic acid. Not active on 7-deoxyloganetic acid. In Catharanthus roseus (Madagascar periwinkle), this protein is 7-deoxyloganic acid hydroxylase.